The following is a 970-amino-acid chain: Rho GTPase-activating protein gacK (970 aa).

Positions 1 to 20 (MTLVYEKSSFVLIMAQIAEA) are cleaved as a signal peptide. Disordered stretches follow at residues 30–49 (SNDL…SAAI), 258–285 (STCS…INQN), 312–446 (EITI…FSPT), 487–550 (STSN…NNNN), and 860–886 (TASS…NDDP). 2 stretches are compositionally biased toward low complexity: residues 35–49 (STSA…SAAI) and 258–269 (STCSLSSNASNN). The segment covering 321-333 (IPLPPQSSSPPPT) has biased composition (pro residues). Over residues 334–383 (RNNQSSPSPSSPQQQNIMPTPPSTSLTPPQSPTLSPSSSTHSTPTQTTTT) the composition is skewed to low complexity. The span at 392 to 406 (PSTISQNNARKTQIP) shows a compositional bias: polar residues. Low complexity predominate over residues 407–426 (TTTTTTTTTTTTTSTTSTTS). Over residues 427 to 446 (PNPVVNNKNLNTPSSSFSPT) the composition is skewed to polar residues. Residues 754–970 (IEDSELVEDN…LELIQFNKSL (217 aa)) form the Rho-GAP domain. Residues 860–885 (TASSAATANSSSSGSGNGNSSPNNDD) are compositionally biased toward low complexity.

It is found in the cytoplasm. Rho GTPase-activating protein involved in the signal transduction pathway. The sequence is that of Rho GTPase-activating protein gacK (gacK) from Dictyostelium discoideum (Social amoeba).